Reading from the N-terminus, the 691-residue chain is ERI1 exoribonuclease 2 (691 aa).

The Exonuclease domain occupies 37–226 (LIVIDFESTC…DDSRNTALLA (190 aa)). Residues aspartate 41, glutamate 43, and aspartate 156 each contribute to the Mg(2+) site. Glutamate 43 acts as the Proton acceptor in catalysis. Glutamate 43 provides a ligand contact to AMP. The active-site Proton acceptor is the histidine 213. Residue histidine 213 participates in AMP binding. A Mg(2+)-binding site is contributed by aspartate 218. Zn(2+) contacts are provided by cysteine 597, cysteine 599, cysteine 622, and cysteine 634. Residues 597–643 (CKCGRRSKRLVVSNNGPNHGKVFYCCPIGKYQENRKCCGYFKWEQTL) form a GRF-type zinc finger.

Belongs to the ERI2 family. Mg(2+) is required as a cofactor.

This is ERI1 exoribonuclease 2 (ERI2) from Homo sapiens (Human).